The chain runs to 123 residues: Small ribosomal subunit protein uS13 (123 aa).

A disordered region spans residues 103–123; the sequence is TRTNARTRKGPKKTVGVRRKK. Residues 105 to 123 show a composition bias toward basic residues; it reads TNARTRKGPKKTVGVRRKK.

Belongs to the universal ribosomal protein uS13 family. In terms of assembly, part of the 30S ribosomal subunit. Forms a loose heterodimer with protein S19. Forms two bridges to the 50S subunit in the 70S ribosome.

Its function is as follows. Located at the top of the head of the 30S subunit, it contacts several helices of the 16S rRNA. In the 70S ribosome it contacts the 23S rRNA (bridge B1a) and protein L5 of the 50S subunit (bridge B1b), connecting the 2 subunits; these bridges are implicated in subunit movement. Contacts the tRNAs in the A and P-sites. The protein is Small ribosomal subunit protein uS13 of Desulforudis audaxviator (strain MP104C).